A 131-amino-acid chain; its full sequence is Transcription antitermination protein NusB (131 aa).

It belongs to the NusB family.

In terms of biological role, involved in transcription antitermination. Required for transcription of ribosomal RNA (rRNA) genes. Binds specifically to the boxA antiterminator sequence of the ribosomal RNA (rrn) operons. This Ligilactobacillus salivarius (strain UCC118) (Lactobacillus salivarius) protein is Transcription antitermination protein NusB.